A 91-amino-acid chain; its full sequence is Small integral membrane protein 12 (91 aa).

A helical transmembrane segment spans residues 12-34 (YAPYVTFPVAFVVGAVGYHLEWF).

The protein belongs to the SMIM12 family.

It localises to the membrane. In Danio rerio (Zebrafish), this protein is Small integral membrane protein 12 (smim12).